Here is a 217-residue protein sequence, read N- to C-terminus: MVKYFLGQSVLRSSWDQVFAAFWQRYPNPYSKHVLTEDIVHREVTPDQKLLSRRLLTKTNRMPRWAERLFPANVAHSVYILEDSIVDPQNQTMTTFTWNINHARLMVVEERCVYCVNSDNSGWTEIRREAWVSSSLFGVSRAVQEFGLARFKSNVTKTMKGFEYILAKLQGEAPSKTLVETAKEAKEKAKETALAATEKAKDLANKAATKQQQRQLV.

A PRELI/MSF1 domain is found at 36–174 (TEDIVHREVT…ILAKLQGEAP (139 aa)).

Forms a complex with TRIAP1 in the mitochondrion intermembrane space. Interacts with OPA1 and AIFM1. As to expression, abundantly expressed in all tissues tested except testis with highest levels in thymus.

It is found in the mitochondrion. The protein resides in the mitochondrion intermembrane space. The enzyme catalyses a 1,2-diacyl-sn-glycero-3-phosphate(in) = a 1,2-diacyl-sn-glycero-3-phosphate(out). Functionally, involved in the modulation of the mitochondrial apoptotic pathway by ensuring the accumulation of cardiolipin (CL) in mitochondrial membranes. In vitro, the TRIAP1:PRELID1 complex mediates the transfer of phosphatidic acid (PA) between liposomes and probably functions as a PA transporter across the mitochondrion intermembrane space to provide PA for CL synthesis in the inner membrane. Regulates the mitochondrial apoptotic pathway in primary Th cells. Regulates Th cell differentiation by down-regulating STAT6 thereby reducing IL-4-induced Th2 cell number. May be important for the development of vital and immunocompetent organs. In Mus musculus (Mouse), this protein is PRELI domain-containing protein 1, mitochondrial (Prelid1).